Here is a 200-residue protein sequence, read N- to C-terminus: Casparian strip membrane protein 1 (200 aa).

At 1-38 the chain is on the cytoplasmic side; that stretch reads MKSGDHAAIDVPESSAVAKGKAPLIATPREQKSGFKKG. Residues 39-59 traverse the membrane as a helical segment; sequence LGIFDFLLRLGAIIAALAAAA. Topologically, residues 60-86 are extracellular; that stretch reads TMGTSDETLPFFTQFFQFEASYDDLPT. A helical transmembrane segment spans residues 87 to 107; it reads FMFFVIAMALIGGYLVLSLPF. Residues 108–121 lie on the Cytoplasmic side of the membrane; it reads SIVTIVRPHAVAPR. Residues 122-142 form a helical membrane-spanning segment; that stretch reads LLLFILDIVALTLTTAAGAAA. The Extracellular portion of the chain corresponds to 143-171; it reads AAIVYLAHNGNPNTNWLAICQQFGDFCQE. Residues 172-192 form a helical membrane-spanning segment; it reads VSGAVVASFVTVVVLMSLVLL. At 193–200 the chain is on the cytoplasmic side; that stretch reads SGVALKKH.

This sequence belongs to the Casparian strip membrane proteins (CASP) family. In terms of assembly, homodimer and heterodimers.

It localises to the cell membrane. Functionally, regulates membrane-cell wall junctions and localized cell wall deposition. Required for establishment of the Casparian strip membrane domain (CSD) and the subsequent formation of Casparian strips, a cell wall modification of the root endodermis that determines an apoplastic barrier between the intraorganismal apoplasm and the extraorganismal apoplasm and prevents lateral diffusion. This Theobroma cacao (Cacao) protein is Casparian strip membrane protein 1.